The chain runs to 241 residues: Octanoyltransferase (241 aa).

Residues 38–227 (AGGPDTLLLL…AVCNALDGAL (190 aa)) form the BPL/LPL catalytic domain. Substrate contacts are provided by residues 85-92 (RGGKITWH), 157-159 (AIG), and 170-172 (GFA). The active-site Acyl-thioester intermediate is the cysteine 188.

It belongs to the LipB family.

It localises to the cytoplasm. It catalyses the reaction octanoyl-[ACP] + L-lysyl-[protein] = N(6)-octanoyl-L-lysyl-[protein] + holo-[ACP] + H(+). It participates in protein modification; protein lipoylation via endogenous pathway; protein N(6)-(lipoyl)lysine from octanoyl-[acyl-carrier-protein]: step 1/2. In terms of biological role, catalyzes the transfer of endogenously produced octanoic acid from octanoyl-acyl-carrier-protein onto the lipoyl domains of lipoate-dependent enzymes. Lipoyl-ACP can also act as a substrate although octanoyl-ACP is likely to be the physiological substrate. The protein is Octanoyltransferase of Mycobacterium marinum (strain ATCC BAA-535 / M).